A 336-amino-acid polypeptide reads, in one-letter code: IgLON family member 5 (336 aa).

The N-terminal stretch at 1-30 (MPPPAPGARLRLLAAAALAGLAVISRGLLS) is a signal peptide. Ig-like C2-type domains are found at residues 33-122 (LEFS…QPYT), 132-213 (PARI…VLVT), and 218-307 (PTIT…MRLL). Asparagine 41, asparagine 49, asparagine 67, and asparagine 137 each carry an N-linked (GlcNAc...) asparagine glycan. Residues cysteine 54 and cysteine 112 are joined by a disulfide bond. 2 disulfides stabilise this stretch: cysteine 154/cysteine 195 and cysteine 238/cysteine 291. A glycan (N-linked (GlcNAc...) asparagine) is linked at asparagine 288.

The protein belongs to the immunoglobulin superfamily. IgLON family.

It is found in the secreted. The protein is IgLON family member 5 (Iglon5) of Mus musculus (Mouse).